The following is a 1907-amino-acid chain: Receptor-type tyrosine-protein phosphatase F (1907 aa).

The first 29 residues, 1-29 (MAPEPAPGRTMVPLVPALVMLGLVAGAHG), serve as a signal peptide directing secretion. Topologically, residues 30–1263 (DSKPVFIKVP…QQQEEPEMLW (1234 aa)) are extracellular. 3 Ig-like C2-type domains span residues 33–123 (PVFI…AKLS), 135–224 (PSID…ANLY), and 232–314 (PRFS…AQVT). C54 and C107 are disulfide-bonded. Residue 68–77 (KKGKKVSSQR) participates in heparin binding. N117 carries an N-linked (GlcNAc...) asparagine glycan. The cysteines at positions 156 and 207 are disulfide-linked. N-linked (GlcNAc...) asparagine glycosylation is found at N250 and N295. An intrachain disulfide couples C253 to C298. Fibronectin type-III domains follow at residues 321–411 (PPID…TGEQ), 416–510 (PPRR…TQQG), 514–604 (QPAD…TAQS), 609–706 (PPQK…TDED), 711–819 (PPRK…TTGA), 820–914 (VPGR…PEDL), 918–1010 (FPQN…TMPV), and 1014–1098 (FAKN…TAPD). The segment at 398–417 (GPPSEAVRARTGEQAPSSPP) is disordered. The disordered stretch occupies residues 693-712 (GPESSPVLVRTDEDVPSGPP). N-linked (GlcNAc...) asparagine glycosylation is present at N721. The N-linked (GlcNAc...) asparagine glycan is linked to N966. Residues 1264-1284 (VTGPVLAVILIILIVIAILLF) traverse the membrane as a helical segment. At 1285–1907 (KRKRTHSPSS…YLGSFDHYAT (623 aa)) the chain is on the cytoplasmic side. S1305 is modified (phosphoserine). 2 Tyrosine-protein phosphatase domains span residues 1352–1607 (FSQE…LLEA) and 1639–1898 (MELE…ALEY). Residues D1516, 1548 to 1554 (CSAGVGR), and Q1592 contribute to the substrate site. The Phosphocysteine intermediate role is filled by C1548. C1839 (phosphocysteine intermediate) is an active-site residue.

Belongs to the protein-tyrosine phosphatase family. Receptor class 2A subfamily. As to quaternary structure, interacts with GRIP1. Interacts with PPFIA1, PPFIA2 and PPFIA3. Interacts with INSR.

It localises to the membrane. It carries out the reaction O-phospho-L-tyrosyl-[protein] + H2O = L-tyrosyl-[protein] + phosphate. Its function is as follows. Possible cell adhesion receptor. It possesses an intrinsic protein tyrosine phosphatase activity (PTPase) and dephosphorylates EPHA2 regulating its activity. In terms of biological role, the first PTPase domain has enzymatic activity, while the second one seems to affect the substrate specificity of the first one. The sequence is that of Receptor-type tyrosine-protein phosphatase F (PTPRF) from Homo sapiens (Human).